The primary structure comprises 302 residues: Putative S-adenosyl-L-methionine-dependent methyltransferase MAP_1622c (302 aa).

Residues D129 and 158–159 each bind S-adenosyl-L-methionine; that span reads DL.

This sequence belongs to the UPF0677 family.

In terms of biological role, exhibits S-adenosyl-L-methionine-dependent methyltransferase activity. The protein is Putative S-adenosyl-L-methionine-dependent methyltransferase MAP_1622c of Mycolicibacterium paratuberculosis (strain ATCC BAA-968 / K-10) (Mycobacterium paratuberculosis).